A 215-amino-acid chain; its full sequence is Adenylate kinase (215 aa).

An ATP-binding site is contributed by 10 to 15; the sequence is GTGKGT. An NMP region spans residues 30 to 59; sequence STGDMLRESVVLKNKIGMIIKNIIEEGKLV. Residues Thr31, Arg36, 57–59, 85–88, and Gln92 each bind AMP; these read KLV and GFPR. The interval 122 to 159 is LID; sequence GRRIHIQSGRIYHVKFKPPKIKDKDDLTGQTLITRKDD. ATP-binding positions include Arg123 and 132–133; that span reads IY. AMP is bound by residues Arg156 and Arg167. Leu200 provides a ligand contact to ATP.

It belongs to the adenylate kinase family. In terms of assembly, monomer.

The protein resides in the cytoplasm. It catalyses the reaction AMP + ATP = 2 ADP. The protein operates within purine metabolism; AMP biosynthesis via salvage pathway; AMP from ADP: step 1/1. Its function is as follows. Catalyzes the reversible transfer of the terminal phosphate group between ATP and AMP. Plays an important role in cellular energy homeostasis and in adenine nucleotide metabolism. In Buchnera aphidicola subsp. Acyrthosiphon pisum (strain 5A), this protein is Adenylate kinase.